Consider the following 78-residue polypeptide: Putative DPH3 homolog B (78 aa).

A DPH-type MB domain is found at 4-60 (FHDEVEIEDFQYDEDSETYFCPCPCGDNFSITKEELENGEGVAMCPGCSLIIKVIYD). Zn(2+) is bound by residues Cys-26, Cys-28, Cys-48, and Cys-51.

The protein belongs to the DPH3 family.

In Homo sapiens (Human), this protein is Putative DPH3 homolog B (DPH3P1).